The primary structure comprises 339 residues: Phenylalanine--tRNA ligase alpha subunit (339 aa).

A Mg(2+)-binding site is contributed by glutamate 250.

This sequence belongs to the class-II aminoacyl-tRNA synthetase family. Phe-tRNA synthetase alpha subunit type 1 subfamily. In terms of assembly, tetramer of two alpha and two beta subunits. The cofactor is Mg(2+).

It localises to the cytoplasm. It carries out the reaction tRNA(Phe) + L-phenylalanine + ATP = L-phenylalanyl-tRNA(Phe) + AMP + diphosphate + H(+). This is Phenylalanine--tRNA ligase alpha subunit from Bacteroides thetaiotaomicron (strain ATCC 29148 / DSM 2079 / JCM 5827 / CCUG 10774 / NCTC 10582 / VPI-5482 / E50).